An 838-amino-acid chain; its full sequence is Probable beta-glucosidase I (838 aa).

An N-linked (GlcNAc...) asparagine glycan is attached at N197. Residue D225 is part of the active site. Residues 395 to 555 enclose the PA14 domain; sequence DGKKGFKFRV…SQEELISKAA (161 aa). The N-linked (GlcNAc...) asparagine glycan is linked to N493.

It belongs to the glycosyl hydrolase 3 family.

The protein resides in the secreted. The catalysed reaction is Hydrolysis of terminal, non-reducing beta-D-glucosyl residues with release of beta-D-glucose.. Its pathway is glycan metabolism; cellulose degradation. In terms of biological role, beta-glucosidases are one of a number of cellulolytic enzymes involved in the degradation of cellulosic biomass. Catalyzes the last step releasing glucose from the inhibitory cellobiose. The protein is Probable beta-glucosidase I (bglI) of Aspergillus fumigatus (strain ATCC MYA-4609 / CBS 101355 / FGSC A1100 / Af293) (Neosartorya fumigata).